Here is a 33-residue protein sequence, read N- to C-terminus: Photosystem II reaction center protein Psb30 (33 aa).

The chain crosses the membrane as a helical span at residues 5-25 (VVAQLTVLALIVVSGPLVIGL).

The protein belongs to the Psb30/Ycf12 family. PSII is composed of 1 copy each of membrane proteins PsbA, PsbB, PsbC, PsbD, PsbE, PsbF, PsbH, PsbI, PsbJ, PsbK, PsbL, PsbM, PsbT, PsbX, PsbY, PsbZ, Psb30/Ycf12, peripheral proteins of the oxygen-evolving complex and a large number of cofactors. It forms dimeric complexes.

The protein localises to the plastid. It localises to the chloroplast thylakoid membrane. A core subunit of photosystem II (PSII), probably helps stabilize the reaction center. This chain is Photosystem II reaction center protein Psb30, found in Zygnema circumcarinatum (Green alga).